We begin with the raw amino-acid sequence, 283 residues long: Methylamine utilization ferredoxin-type protein MauN (283 aa).

4Fe-4S ferredoxin-type domains lie at 217–248 (VRVS…PALK) and 251–280 (GSPL…MASR). Cys227, Cys230, Cys233, Cys237, Cys260, Cys263, Cys266, and Cys270 together coordinate [4Fe-4S] cluster.

It participates in one-carbon metabolism; methylamine degradation. Its function is as follows. Involved in electron transfer. The sequence is that of Methylamine utilization ferredoxin-type protein MauN (mauN) from Paracoccus denitrificans (strain Pd 1222).